Consider the following 96-residue polypeptide: Small ribosomal subunit protein bS20 (96 aa).

It belongs to the bacterial ribosomal protein bS20 family.

In terms of biological role, binds directly to 16S ribosomal RNA. The polypeptide is Small ribosomal subunit protein bS20 (Anaplasma phagocytophilum (strain HZ)).